The following is a 57-amino-acid chain: Small hydrophobic protein (57 aa).

Over 1-8 (MPLIQPPL) the chain is Virion surface. A helical membrane pass occupies residues 9 to 29 (YLTFLLLMLLYRIITLYVWSL). The Intravirion portion of the chain corresponds to 30-57 (STITYKTSVRHASLYQRSFFRWSVDHSL).

Belongs to the rubulavirus small hydrophobic protein family. In terms of assembly, interacts with host TNFRSF1A, RIPK1 and IRAK1; these interactions interfere with host NF-kappa-B activation at the level of receptor complexes. Interacts with host protein UBQLN4.

The protein localises to the virion membrane. The protein resides in the host cell membrane. Its function is as follows. Plays a role in the inhibition of the host NF-kappa-B pathway. This inhibition occurs at the receptor level, by preventing the signaling of TNFR1 as well as IL-1R and TLR3. The polypeptide is Small hydrophobic protein (SH) (Homo sapiens (Human)).